Here is a 328-residue protein sequence, read N- to C-terminus: Naphthalene 1,2-dioxygenase system ferredoxin--NAD(P)(+), reductase component (328 aa).

The 2Fe-2S ferredoxin-type domain maps to M1–D89. 4 residues coordinate [2Fe-2S] cluster: C35, C40, C43, and C73. Positions A96 to R193 constitute an FAD-binding FR-type domain.

This sequence belongs to the bacterial ring-hydroxylating dioxygenase ferredoxin reductase component family. In terms of assembly, the naphthalene dioxygenase (NDO) multicomponent enzyme system is composed of an electron transfer component and a dioxygenase component (iron sulfur protein (ISP)). The electron transfer component is composed of a ferredoxin reductase (NdoR) and a ferredoxin (NdoA), and the dioxygenase component is formed of a heterohexamer (trimer of heterodimers) of three large alpha subunits (NdoB) and three small beta subunits (NdoC). [2Fe-2S] cluster serves as cofactor. It depends on FAD as a cofactor.

It carries out the reaction 2 reduced [2Fe-2S]-[ferredoxin] + NAD(+) + H(+) = 2 oxidized [2Fe-2S]-[ferredoxin] + NADH. The catalysed reaction is 2 reduced [2Fe-2S]-[ferredoxin] + NADP(+) + H(+) = 2 oxidized [2Fe-2S]-[ferredoxin] + NADPH. It functions in the pathway aromatic compound metabolism; naphthalene degradation. With respect to regulation, strongly inhibited by p-chloromercuribenzoate. Also inhibited by N-ethylmaleimide and o-phenanthroline. Functionally, component of the naphthalene dioxygenase (NDO) multicomponent enzyme system which catalyzes the incorporation of both atoms of molecular oxygen into naphthalene to form cis-(1R,2S)-dihydroxy-1,2-dihydronaphthalene. Ferredoxin reductase catalyzes the transfer of electrons from NADH to ferredoxin (NdoA). NADPH is also effective but yields only 39% of the activity obtained with NADH. Also able to catalyze the cis-dihydroxylation of biphenyl and phenanthrene. This chain is Naphthalene 1,2-dioxygenase system ferredoxin--NAD(P)(+), reductase component (ndoR), found in Pseudomonas putida (Arthrobacter siderocapsulatus).